A 480-amino-acid polypeptide reads, in one-letter code: Cyclin L homolog cyl-1 (480 aa).

Positions 25–58 are disordered; that stretch reads PKEQNGNVEPKKEEDEKFESTYKQNENTQITPSS. Residues 33–44 show a composition bias toward basic and acidic residues; the sequence is EPKKEEDEKFES. Residues 45–58 show a composition bias toward polar residues; that stretch reads TYKQNENTQITPSS. The 140-residue stretch at 91–230 folds into the Cyclin N-terminal domain; the sequence is PSLVDGLSKE…RRILATLGFV (140 aa). Residues 368–480 are disordered; sequence KMAPDGEKST…ESSTPPRSRR (113 aa). Basic and acidic residues-rich tracts occupy residues 384–409 and 418–442; these read KDSRKVSPDRKNGTKDRGEADRGKKE and NDRDGRGDRRDRDKDRGDRRKDEKK. A compositionally biased stretch (basic residues) spans 443–453; sequence DRRKRTRSRSR. Positions 454-472 are enriched in basic and acidic residues; it reads DRKDKNRNRDVGKRYRKES.

Belongs to the cyclin family.

Functionally, involved in pre-mRNA splicing. Functions in association with cyclin-dependent kinases (CDKs). Involved in induction of expression of heat shock protein hsp-16.2 in response to heat shock. Plays a role in male tail development, perhaps acting together with cell cycle regulators cdc-25.2, cdk-1, cyb-3, and cyd-1. In Caenorhabditis elegans, this protein is Cyclin L homolog cyl-1.